Here is a 39-residue protein sequence, read N- to C-terminus: Cytochrome b6-f complex subunit 5 (39 aa).

Residues 5–25 (LLCGIVLGLVPITIVGLFVSA) form a helical membrane-spanning segment.

The protein belongs to the PetG family. As to quaternary structure, the 4 large subunits of the cytochrome b6-f complex are cytochrome b6, subunit IV (17 kDa polypeptide, PetD), cytochrome f and the Rieske protein, while the 4 small subunits are PetG, PetL, PetM and PetN. The complex functions as a dimer.

Its subcellular location is the cellular thylakoid membrane. Functionally, component of the cytochrome b6-f complex, which mediates electron transfer between photosystem II (PSII) and photosystem I (PSI), cyclic electron flow around PSI, and state transitions. PetG is required for either the stability or assembly of the cytochrome b6-f complex. This chain is Cytochrome b6-f complex subunit 5, found in Prochlorococcus marinus (strain MIT 9211).